We begin with the raw amino-acid sequence, 137 residues long: Large ribosomal subunit protein uL16 (137 aa).

Basic residues predominate over residues Met1 to Met17. A disordered region spans residues Met1–Gly24.

This sequence belongs to the universal ribosomal protein uL16 family. Part of the 50S ribosomal subunit.

Binds 23S rRNA and is also seen to make contacts with the A and possibly P site tRNAs. In Trichodesmium erythraeum (strain IMS101), this protein is Large ribosomal subunit protein uL16.